A 111-amino-acid polypeptide reads, in one-letter code: Large ribosomal subunit protein uL24 (111 aa).

The protein belongs to the universal ribosomal protein uL24 family. As to quaternary structure, part of the 50S ribosomal subunit.

Functionally, one of two assembly initiator proteins, it binds directly to the 5'-end of the 23S rRNA, where it nucleates assembly of the 50S subunit. One of the proteins that surrounds the polypeptide exit tunnel on the outside of the subunit. This is Large ribosomal subunit protein uL24 from Chlamydia trachomatis serovar A (strain ATCC VR-571B / DSM 19440 / HAR-13).